A 620-amino-acid chain; its full sequence is Chaperone protein HscA homolog (620 aa).

The protein belongs to the heat shock protein 70 family.

Its function is as follows. Chaperone involved in the maturation of iron-sulfur cluster-containing proteins. Has a low intrinsic ATPase activity which is markedly stimulated by HscB. The polypeptide is Chaperone protein HscA homolog (Paracidovorax citrulli (strain AAC00-1) (Acidovorax citrulli)).